A 1347-amino-acid chain; its full sequence is Protocadherin-11 X-linked (1347 aa).

The N-terminal stretch at 1-23 is a signal peptide; sequence MDLLSGTYIFAVLLACVVFHSGA. Topologically, residues 24–812 are extracellular; that stretch reads QEKNYTIREE…VSSPTSDYVK (789 aa). 7 Cadherin domains span residues 26 to 139, 140 to 249, 250 to 355, 362 to 466, 467 to 570, 571 to 673, and 677 to 795; these read KNYT…APLF, PATV…HPVF, KETE…VPSI, NPVN…APVF, TQSF…SPVF, THNE…KPVF, and PSNY…APVT. 3 N-linked (GlcNAc...) asparagine glycosylation sites follow: N27, N48, and N54. N344 carries N-linked (GlcNAc...) asparagine glycosylation. N553 carries an N-linked (GlcNAc...) asparagine glycan. N773 carries an N-linked (GlcNAc...) asparagine glycan. A helical membrane pass occupies residues 813-833; it reads ILVAAVAGTITVVVVIFITAV. Over 834-1347 the chain is Cytoplasmic; sequence VRCRQAPHLK…DSPVMEEHPL (514 aa). Disordered stretches follow at residues 1057-1091, 1097-1116, and 1325-1347; these read LPEGSQESSSDGGLGDHDAGSLTSTSHGLPLGYPQ, RATPSNRTEGDGNSDPESTF, and TFTPRQQARPSRGDSPVMEEHPL.

The protein resides in the cell membrane. In terms of biological role, potential calcium-dependent cell-adhesion protein. The protein is Protocadherin-11 X-linked (PCDH11X) of Pan troglodytes (Chimpanzee).